Here is a 614-residue protein sequence, read N- to C-terminus: Acetylcholinesterase (614 aa).

The signal sequence occupies residues 1-31 (MRPPWYPLHTPSLASPLLFLLLSLLGGGARA). Cysteines 100 and 127 form a disulfide. Serine 234 (acyl-ester intermediate) is an active-site residue. The cysteines at positions 288 and 303 are disulfide-linked. Asparagine 296 is a glycosylation site (N-linked (GlcNAc...) asparagine). The Charge relay system role is filled by glutamate 365. Asparagine 381 carries an N-linked (GlcNAc...) asparagine glycan. Cysteine 440 and cysteine 560 form a disulfide bridge. Catalysis depends on histidine 478, which acts as the Charge relay system. Asparagine 495 is a glycosylation site (N-linked (GlcNAc...) asparagine).

Belongs to the type-B carboxylesterase/lipase family. As to quaternary structure, homotetramer; composed of disulfide-linked homodimers. Catalytic forms H (GPI-anchor dimer) and T (asymmetric collagen-tailed), which differ in their C-terminus, account for all types of known ACHE forms. Interacts with PRIMA1. The interaction with PRIMA1 is required to anchor it to the basal lamina of cells and organize into tetramers. Has been found in central nervous system and muscle. Found in embryonic liver and spleen but not in adult liver.

Its subcellular location is the synapse. It localises to the secreted. It is found in the cell membrane. It carries out the reaction acetylcholine + H2O = choline + acetate + H(+). Its function is as follows. Terminates signal transduction at the neuromuscular junction by rapid hydrolysis of the acetylcholine released into the synaptic cleft. The polypeptide is Acetylcholinesterase (Ache) (Rattus norvegicus (Rat)).